The sequence spans 142 residues: Large ribosomal subunit protein uL11 (142 aa).

The protein belongs to the universal ribosomal protein uL11 family. Part of the ribosomal stalk of the 50S ribosomal subunit. Interacts with L10 and the large rRNA to form the base of the stalk. L10 forms an elongated spine to which L12 dimers bind in a sequential fashion forming a multimeric L10(L12)X complex. One or more lysine residues are methylated.

Functionally, forms part of the ribosomal stalk which helps the ribosome interact with GTP-bound translation factors. The sequence is that of Large ribosomal subunit protein uL11 from Shigella boydii serotype 18 (strain CDC 3083-94 / BS512).